Consider the following 423-residue polypeptide: Adenylosuccinate synthetase (423 aa).

GTP is bound by residues 12–18 and 40–42; these read GDEGKGK and GHT. Asp13 (proton acceptor) is an active-site residue. Residues Asp13 and Gly40 each coordinate Mg(2+). Residues 13 to 16, 38 to 41, Thr129, Arg143, Gln221, Thr236, and Arg300 contribute to the IMP site; these read DEGK and NAGH. The Proton donor role is filled by His41. Residue 296–302 participates in substrate binding; the sequence is SVTGRKR. GTP-binding positions include Arg302 and 408–410; that span reads SVG.

This sequence belongs to the adenylosuccinate synthetase family. As to quaternary structure, homodimer. Requires Mg(2+) as cofactor.

It localises to the cytoplasm. The enzyme catalyses IMP + L-aspartate + GTP = N(6)-(1,2-dicarboxyethyl)-AMP + GDP + phosphate + 2 H(+). Its pathway is purine metabolism; AMP biosynthesis via de novo pathway; AMP from IMP: step 1/2. In terms of biological role, plays an important role in the de novo pathway of purine nucleotide biosynthesis. Catalyzes the first committed step in the biosynthesis of AMP from IMP. The sequence is that of Adenylosuccinate synthetase from Bacteroides thetaiotaomicron (strain ATCC 29148 / DSM 2079 / JCM 5827 / CCUG 10774 / NCTC 10582 / VPI-5482 / E50).